The primary structure comprises 143 residues: Hemoglobin cathodic subunit alpha (143 aa).

Ser2 is modified (N-acetylserine). Residues 2 to 143 (SLTAKDKSLI…LGAALSDKYR (142 aa)) enclose the Globin domain. Residue His60 participates in O2 binding. His89 provides a ligand contact to heme b.

It belongs to the globin family. In terms of assembly, heterotetramer of two alpha chains and two beta chains. As to expression, red blood cells.

Functionally, involved in oxygen transport from gills to the various peripheral tissues. The protein is Hemoglobin cathodic subunit alpha of Anguilla anguilla (European freshwater eel).